We begin with the raw amino-acid sequence, 72 residues long: Translation initiation factor IF-1 (72 aa).

The region spanning 1–72 (MAKEDVIEFS…TKGRITFRYK (72 aa)) is the S1-like domain.

The protein belongs to the IF-1 family. Component of the 30S ribosomal translation pre-initiation complex which assembles on the 30S ribosome in the order IF-2 and IF-3, IF-1 and N-formylmethionyl-tRNA(fMet); mRNA recruitment can occur at any time during PIC assembly.

The protein localises to the cytoplasm. One of the essential components for the initiation of protein synthesis. Stabilizes the binding of IF-2 and IF-3 on the 30S subunit to which N-formylmethionyl-tRNA(fMet) subsequently binds. Helps modulate mRNA selection, yielding the 30S pre-initiation complex (PIC). Upon addition of the 50S ribosomal subunit IF-1, IF-2 and IF-3 are released leaving the mature 70S translation initiation complex. In Paramagnetospirillum magneticum (strain ATCC 700264 / AMB-1) (Magnetospirillum magneticum), this protein is Translation initiation factor IF-1.